Consider the following 205-residue polypeptide: Ribosomal RNA small subunit methyltransferase G (205 aa).

S-adenosyl-L-methionine-binding positions include glycine 70, leucine 75, 121–122 (IE), and arginine 136.

The protein belongs to the methyltransferase superfamily. RNA methyltransferase RsmG family.

It is found in the cytoplasm. The catalysed reaction is guanosine(527) in 16S rRNA + S-adenosyl-L-methionine = N(7)-methylguanosine(527) in 16S rRNA + S-adenosyl-L-homocysteine. Its function is as follows. Specifically methylates the N7 position of guanine in position 527 of 16S rRNA. This is Ribosomal RNA small subunit methyltransferase G from Methylococcus capsulatus (strain ATCC 33009 / NCIMB 11132 / Bath).